A 396-amino-acid chain; its full sequence is MAAAVDTFLFTSESVNEGHPDKLCDQISDAVLDACLAQDPESKVACETCTKTNLVMVFGEITTKADVDYEKIVRQTCRDIGFVSADVGLDADNCKVLVYIEQQSPDIAQGVHGHLSRRPEEIGAGDQGHMFGYASDETPELMPLSHVLATKLGARLTEVRKNGTCPWLRPDGKTQVTVEYYNENGAMVPIRVHTVLISTQHDETVTNDEIAADLKEHVIKPVIPEKYLDEKTIFHLNPSGRFVIGGPHGDAGLTGRKIIIDTYGGWGAHGGGAFSGKDPTKVDRSGAYIARQAAKSIVAAGLARRCIVQISYAIGVPEPLSVFVDTYGTGKIPDKEILKIVKETFDFRPGMIAINLDLLKGGSRYLKTAAYGHFGRDDADFTWETVKPLKWEKPQA.

Glutamate 13 lines the Mg(2+) pocket. Residue histidine 19 participates in ATP binding. Glutamate 47 contacts K(+). 2 residues coordinate L-methionine: glutamate 60 and glutamine 103. Residues 171-173, 239-242, aspartate 250, 256-257, alanine 273, lysine 277, and lysine 281 each bind ATP; these read DGK, SGRF, and RK. Aspartate 250 contributes to the L-methionine binding site. Position 281 (lysine 281) interacts with L-methionine.

The protein belongs to the AdoMet synthase family. Homotetramer. Mn(2+) serves as cofactor. The cofactor is Mg(2+). Requires Co(2+) as cofactor. K(+) is required as a cofactor. Expressed in roots, stems and leaves (at protein level).

It localises to the cytoplasm. It carries out the reaction L-methionine + ATP + H2O = S-adenosyl-L-methionine + phosphate + diphosphate. Its pathway is amino-acid biosynthesis; S-adenosyl-L-methionine biosynthesis; S-adenosyl-L-methionine from L-methionine: step 1/1. Catalyzes the formation of S-adenosylmethionine from methionine and ATP. The reaction comprises two steps that are both catalyzed by the same enzyme: formation of S-adenosylmethionine (AdoMet) and triphosphate, and subsequent hydrolysis of the triphosphate. May be involved in the synthesis of betain in response to abiotic stress such as high salinity. The polypeptide is S-adenosylmethionine synthase 2 (SAMS2) (Atriplex nummularia (Old man saltbush)).